We begin with the raw amino-acid sequence, 128 residues long: ATP synthase epsilon chain (128 aa).

The disordered stretch occupies residues 98 to 128; sequence EALDMPSSTPEQAQIKDAAVRRARGQLRASR. Residues 118–128 show a composition bias toward basic residues; it reads RRARGQLRASR.

Belongs to the ATPase epsilon chain family. In terms of assembly, F-type ATPases have 2 components, CF(1) - the catalytic core - and CF(0) - the membrane proton channel. CF(1) has five subunits: alpha(3), beta(3), gamma(1), delta(1), epsilon(1). CF(0) has three main subunits: a, b and c.

Its subcellular location is the cell inner membrane. Functionally, produces ATP from ADP in the presence of a proton gradient across the membrane. This is ATP synthase epsilon chain from Rhodopirellula baltica (strain DSM 10527 / NCIMB 13988 / SH1).